Consider the following 940-residue polypeptide: Lysine-specific demethylase 7A (940 aa).

The PHD-type zinc finger occupies P37–L88. The segment at R97–P114 is linker. Positions F230 to K386 constitute a JmjC domain. T279 contacts substrate. Fe cation contacts are provided by H282 and D284. K299 provides a ligand contact to substrate. H354 is a Fe cation binding site. Disordered stretches follow at residues V483–R509, L599–T670, S710–S729, N818–I854, and S876–A920. The residue at position 604 (S604) is a Phosphoserine. The segment covering T613–S623 has biased composition (polar residues). The span at S714 to C724 shows a compositional bias: basic and acidic residues.

This sequence belongs to the JHDM1 histone demethylase family. JHDM1D subfamily. The cofactor is Fe(2+).

The protein localises to the nucleus. The catalysed reaction is N(6),N(6)-dimethyl-L-lysyl(9)-[histone H3] + 2 2-oxoglutarate + 2 O2 = L-lysyl(9)-[histone H3] + 2 formaldehyde + 2 succinate + 2 CO2. It carries out the reaction N(6),N(6)-dimethyl-L-lysyl(27)-[histone H3] + 2 2-oxoglutarate + 2 O2 = L-lysyl(27)-[histone H3] + 2 formaldehyde + 2 succinate + 2 CO2. It catalyses the reaction N(6),N(6)-dimethyl-L-lysyl(36)-[histone H3] + 2-oxoglutarate + O2 = N(6)-methyl-L-lysyl(36)-[histone H3] + formaldehyde + succinate + CO2. The enzyme catalyses N(6)-methyl-L-lysyl(20)-[histone H4] + 2-oxoglutarate + O2 = L-lysyl(20)-[histone H4] + formaldehyde + succinate + CO2. In terms of biological role, histone demethylase required for brain development. Specifically demethylates dimethylated 'Lys-9', 'Lys-27' and 'Lys-36' (H3K9me2, H3K27me2, H3K36me2, respectively) of histone H3 and monomethylated histone H4 'Lys-20' residue (H4K20Me1), thereby playing a central role in histone code. Specifically binds trimethylated 'Lys-4' of histone H3 (H3K4me3), affecting histone demethylase specificity: in presence of H3K4me3, it has no demethylase activity toward H3K9me2, while it has high activity toward H3K27me2. Demethylates H3K9me2 in absence of H3K4me3. Has activity toward H4K20Me1 only when nucleosome is used as a substrate and when not histone octamer is used as substrate. This chain is Lysine-specific demethylase 7A (Kdm7a), found in Mus musculus (Mouse).